The following is a 461-amino-acid chain: Cysteine--tRNA ligase (461 aa).

Residue C28 coordinates Zn(2+). The short motif at 30 to 40 (ITIYDLCHIGH) is the 'HIGH' region element. Residues C209, H234, and E238 each contribute to the Zn(2+) site. The 'KMSKS' region motif lies at 266-270 (KMSKS). K269 lines the ATP pocket.

This sequence belongs to the class-I aminoacyl-tRNA synthetase family. As to quaternary structure, monomer. It depends on Zn(2+) as a cofactor.

Its subcellular location is the cytoplasm. It carries out the reaction tRNA(Cys) + L-cysteine + ATP = L-cysteinyl-tRNA(Cys) + AMP + diphosphate. In Yersinia enterocolitica serotype O:8 / biotype 1B (strain NCTC 13174 / 8081), this protein is Cysteine--tRNA ligase.